Reading from the N-terminus, the 163-residue chain is Nucleotide-binding protein Npun_R4736 (163 aa).

It belongs to the YajQ family.

In terms of biological role, nucleotide-binding protein. The polypeptide is Nucleotide-binding protein Npun_R4736 (Nostoc punctiforme (strain ATCC 29133 / PCC 73102)).